The following is a 351-amino-acid chain: Farnesyl pyrophosphate synthase (351 aa).

Isopentenyl diphosphate-binding residues include lysine 51, arginine 54, and glutamine 92. The Mg(2+) site is built by aspartate 99 and aspartate 103. Arginine 108 serves as a coordination point for dimethylallyl diphosphate. Arginine 109 is an isopentenyl diphosphate binding site. The dimethylallyl diphosphate site is built by lysine 196, threonine 197, glutamine 236, lysine 253, and lysine 262.

This sequence belongs to the FPP/GGPP synthase family. Mg(2+) is required as a cofactor.

It catalyses the reaction isopentenyl diphosphate + dimethylallyl diphosphate = (2E)-geranyl diphosphate + diphosphate. It carries out the reaction isopentenyl diphosphate + (2E)-geranyl diphosphate = (2E,6E)-farnesyl diphosphate + diphosphate. Its pathway is isoprenoid biosynthesis; farnesyl diphosphate biosynthesis; farnesyl diphosphate from geranyl diphosphate and isopentenyl diphosphate: step 1/1. It participates in isoprenoid biosynthesis; geranyl diphosphate biosynthesis; geranyl diphosphate from dimethylallyl diphosphate and isopentenyl diphosphate: step 1/1. Functionally, farnesyl pyrophosphate synthase; part of the second module of ergosterol biosynthesis pathway that includes the middle steps of the pathway. ERG20 catalyzes the sequential condensation of isopentenyl pyrophosphate with dimethylallyl pyrophosphate, and then with the resultant geranylpyrophosphate to the ultimate product farnesyl pyrophosphate. The second module is carried out in the vacuole and involves the formation of farnesyl diphosphate, which is also an important intermediate in the biosynthesis of ubiquinone, dolichol, heme and prenylated proteins. Activity by the mevalonate kinase ERG12 first converts mevalonate into 5-phosphomevalonate. 5-phosphomevalonate is then further converted to 5-diphosphomevalonate by the phosphomevalonate kinase ERG8. The diphosphomevalonate decarboxylase MVD then produces isopentenyl diphosphate. The isopentenyl-diphosphate delta-isomerase IDI1 then catalyzes the 1,3-allylic rearrangement of the homoallylic substrate isopentenyl (IPP) to its highly electrophilic allylic isomer, dimethylallyl diphosphate (DMAPP). Finally the farnesyl diphosphate synthase ERG20 catalyzes the sequential condensation of isopentenyl pyrophosphate with dimethylallyl pyrophosphate, and then with the resultant geranylpyrophosphate to the ultimate product farnesyl pyrophosphate. The polypeptide is Farnesyl pyrophosphate synthase (Candida albicans (strain SC5314 / ATCC MYA-2876) (Yeast)).